Reading from the N-terminus, the 621-residue chain is Interleukin-1 receptor-associated kinase-like 2 (621 aa).

The Death domain occupies 13-94 (LDDLCRNMDT…RAAQIILNWK (82 aa)). Residues 113–175 (GKPLAASVRN…TASADSKDFS (63 aa)) form a disordered region. The span at 157 to 169 (ASSSLKTNQTASA) shows a compositional bias: polar residues. The 271-residue stretch at 206–476 (FNPSHKISEG…AEALVMAACL (271 aa)) folds into the Protein kinase domain. Residues 212–220 (ISEGTFADV), lysine 233, and 333–336 (KSSN) contribute to the ATP site. Residues 503–522 (ETSLPCSGLSEGTGSSFNTP) are compositionally biased toward polar residues. The interval 503-534 (ETSLPCSGLSEGTGSSFNTPEETDDVDNSSFD) is disordered.

This sequence belongs to the protein kinase superfamily. TKL Ser/Thr protein kinase family. Pelle subfamily. Interacts with MYD88. IL-1 stimulation leads to the formation of a signaling complex which dissociates from the IL-1 receptor following the binding of PELI1.

Functionally, binds to the IL-1 type I receptor following IL-1 engagement, triggering intracellular signaling cascades leading to transcriptional up-regulation and mRNA stabilization. The sequence is that of Interleukin-1 receptor-associated kinase-like 2 (IRAK2) from Bos taurus (Bovine).